The primary structure comprises 421 residues: 2-deoxystreptamine N-acetyl-D-glucosaminyltransferase (421 aa).

It belongs to the glycosyltransferase group 1 family. Glycosyltransferase 4 subfamily.

The catalysed reaction is 2-deoxystreptamine + UDP-N-acetyl-alpha-D-glucosamine = 2'-N-acetylparomamine + UDP + H(+). It functions in the pathway antibiotic biosynthesis; neomycin biosynthesis. In terms of biological role, glycosyltransferase involved in the biosynthesis of neomycin by mediating conversion of 2-deoxystreptamine (2-DOS) to 2'-N-acetylparomamine using UDP-alpha-D-glucosamine as sugar donor. In Streptomyces fradiae (Streptomyces roseoflavus), this protein is 2-deoxystreptamine N-acetyl-D-glucosaminyltransferase (neoD).